The primary structure comprises 314 residues: Bifunctional riboflavin kinase/FMN adenylyltransferase (314 aa).

This sequence belongs to the RibF family.

The enzyme catalyses riboflavin + ATP = FMN + ADP + H(+). It carries out the reaction FMN + ATP + H(+) = FAD + diphosphate. The protein operates within cofactor biosynthesis; FAD biosynthesis; FAD from FMN: step 1/1. It participates in cofactor biosynthesis; FMN biosynthesis; FMN from riboflavin (ATP route): step 1/1. In terms of biological role, catalyzes the phosphorylation of riboflavin to FMN followed by the adenylation of FMN to FAD. Can also catalyze the phosphorylation of the toxic riboflavin analogs 8-demethyl-8-aminoriboflavin (AF) to 8-demethyl-8-aminoriboflavin mononucleotide (AFMN) and roseoflavin (RoF) to roseoflavin mononucleotide (RoFMN), and the adenylation of AFMN to 8-demethyl-8-aminoriboflavin adenine dinucleotide (AFAD). The polypeptide is Bifunctional riboflavin kinase/FMN adenylyltransferase (Listeria monocytogenes serovar 1/2a (strain ATCC BAA-679 / EGD-e)).